We begin with the raw amino-acid sequence, 71 residues long: Beta-defensin 7 (71 aa).

Residues 1 to 22 (MRIHYVLFAFLLVLLSPFAAFS) form the signal peptide. Residue Gln23 is modified to Pyrrolidone carboxylic acid. Positions 23–25 (QDI) are excised as a propeptide. 3 disulfide bridges follow: Cys31/Cys58, Cys38/Cys52, and Cys42/Cys59.

It belongs to the beta-defensin family. LAP/TAP subfamily.

The protein resides in the secreted. Functionally, has bactericidal activity. This chain is Beta-defensin 7 (Defb7), found in Mus musculus (Mouse).